Consider the following 433-residue polypeptide: Ectonucleoside triphosphate diphosphohydrolase 5 (433 aa).

A signal peptide spans M1–R24. The active-site Proton acceptor is the E172. N-linked (GlcNAc...) asparagine glycosylation is present at N232. Cystine bridges form between C272/C308 and C368/C382.

Belongs to the GDA1/CD39 NTPase family. As to quaternary structure, monomer; active form. Homodimer; disulfide-linked. Homodimers are enzymatically inactive. The cofactor is Ca(2+). It depends on Mg(2+) as a cofactor. In terms of processing, N-glycosylated; high-mannose type.

It is found in the endoplasmic reticulum. The protein resides in the secreted. The catalysed reaction is a ribonucleoside 5'-diphosphate + H2O = a ribonucleoside 5'-phosphate + phosphate + H(+). It carries out the reaction GDP + H2O = GMP + phosphate + H(+). The enzyme catalyses UDP + H2O = UMP + phosphate + H(+). It catalyses the reaction IDP + H2O = IMP + phosphate + H(+). The catalysed reaction is CDP + H2O = CMP + phosphate + H(+). It carries out the reaction ADP + H2O = AMP + phosphate + H(+). It participates in protein modification; protein glycosylation. Functionally, hydrolyzes nucleoside diphosphates with a preference for GDP, IDP and UDP compared to ADP and CDP. In the lumen of the endoplasmic reticulum, hydrolyzes UDP that acts as an end-product feedback inhibitor of the UDP-Glc:glycoprotein glucosyltransferases. UMP can be transported back by an UDP-sugar antiporter to the cytosol where it is consumed to regenerate UDP-glucose. Therefore, it positively regulates protein reglucosylation by clearing UDP from the ER lumen and by promoting the regeneration of UDP-glucose. Protein reglucosylation is essential to proper glycoprotein folding and quality control in the ER. This is Ectonucleoside triphosphate diphosphohydrolase 5 (ENTPD5) from Ailuropoda melanoleuca (Giant panda).